A 690-amino-acid polypeptide reads, in one-letter code: uncharacterized protein (690 aa).

A disordered region spans residues 553-601 (DESELLENEDKSESLENEDKSESLENEDKSESLENEDKSESLENEKKEK). A compositionally biased stretch (basic and acidic residues) spans 560–601 (NEDKSESLENEDKSESLENEDKSESLENEDKSESLENEKKEK).

This sequence belongs to the glycosyltransferase 2 family.

This is an uncharacterized protein from Rickettsia bellii (strain RML369-C).